The chain runs to 40 residues: Auxin-responsive endogenous peptide 1 (40 aa).

The chain crosses the membrane as a helical span at residues 7–29; it reads LIYRLVVRCFLDYSICAPFYFYH.

In terms of tissue distribution, expressed in cotyledons, hypocotyls, roots, newly developing leaves and shoot apical meristem. Not detected in flowers, siliques or mature leaves.

It localises to the cytoplasm. It is found in the nucleus. The protein resides in the membrane. Functionally, negative regulator of the auxin response. This is Auxin-responsive endogenous peptide 1 from Arabidopsis thaliana (Mouse-ear cress).